Here is a 380-residue protein sequence, read N- to C-terminus: Queuine tRNA-ribosyltransferase (380 aa).

The active-site Proton acceptor is the Asp-96. Substrate contacts are provided by residues 96-100, Asp-150, Gln-193, and Gly-220; that span reads DSGGF. The interval 251–257 is RNA binding; it reads GVGAPDS. Residue Asp-270 is the Nucleophile of the active site. Residues 275–279 are RNA binding; important for wobble base 34 recognition; the sequence is TRIAR. Positions 308, 310, 313, and 339 each coordinate Zn(2+).

It belongs to the queuine tRNA-ribosyltransferase family. As to quaternary structure, homodimer. Within each dimer, one monomer is responsible for RNA recognition and catalysis, while the other monomer binds to the replacement base PreQ1. It depends on Zn(2+) as a cofactor.

It carries out the reaction 7-aminomethyl-7-carbaguanine + guanosine(34) in tRNA = 7-aminomethyl-7-carbaguanosine(34) in tRNA + guanine. It functions in the pathway tRNA modification; tRNA-queuosine biosynthesis. Its function is as follows. Catalyzes the base-exchange of a guanine (G) residue with the queuine precursor 7-aminomethyl-7-deazaguanine (PreQ1) at position 34 (anticodon wobble position) in tRNAs with GU(N) anticodons (tRNA-Asp, -Asn, -His and -Tyr). Catalysis occurs through a double-displacement mechanism. The nucleophile active site attacks the C1' of nucleotide 34 to detach the guanine base from the RNA, forming a covalent enzyme-RNA intermediate. The proton acceptor active site deprotonates the incoming PreQ1, allowing a nucleophilic attack on the C1' of the ribose to form the product. After dissociation, two additional enzymatic reactions on the tRNA convert PreQ1 to queuine (Q), resulting in the hypermodified nucleoside queuosine (7-(((4,5-cis-dihydroxy-2-cyclopenten-1-yl)amino)methyl)-7-deazaguanosine). This Streptococcus sanguinis (strain SK36) protein is Queuine tRNA-ribosyltransferase.